The following is a 316-amino-acid chain: Methionyl-tRNA formyltransferase (316 aa).

110–113 (SLLP) is a binding site for (6S)-5,6,7,8-tetrahydrofolate.

It belongs to the Fmt family.

The enzyme catalyses L-methionyl-tRNA(fMet) + (6R)-10-formyltetrahydrofolate = N-formyl-L-methionyl-tRNA(fMet) + (6S)-5,6,7,8-tetrahydrofolate + H(+). Attaches a formyl group to the free amino group of methionyl-tRNA(fMet). The formyl group appears to play a dual role in the initiator identity of N-formylmethionyl-tRNA by promoting its recognition by IF2 and preventing the misappropriation of this tRNA by the elongation apparatus. The protein is Methionyl-tRNA formyltransferase of Bacillus licheniformis (strain ATCC 14580 / DSM 13 / JCM 2505 / CCUG 7422 / NBRC 12200 / NCIMB 9375 / NCTC 10341 / NRRL NRS-1264 / Gibson 46).